Consider the following 66-residue polypeptide: Brevinin-1DYb (66 aa).

The signal sequence occupies residues 1-22 (MFTLKKSLLLLFFLGTISLSLC). Residues 23-44 (EEERNAEEERRDYPEERDVEVE) constitute a propeptide that is removed on maturation. Cysteine 60 and cysteine 66 form a disulfide bridge.

Expressed by the skin glands.

It is found in the secreted. Functionally, antimicrobial peptide. Has low activity against the Gram-positive bacterium S.aureus and the Gram-negative bacterium E.coli (MIC&lt;15 uM). Has a strong hemolytic activity. This chain is Brevinin-1DYb, found in Rana dybowskii (Dybovsky's frog).